Consider the following 105-residue polypeptide: MKVRKGDTVLVIAGKDKGAKGKVLKAYPDRERVLVEGVNRIKKHTAISTNQRGAQSGGIVTQEAPIHVSNVMVVDSDGKPARVGYRLDEETGKRVRISKRNGKDI.

The protein belongs to the universal ribosomal protein uL24 family. Part of the 50S ribosomal subunit.

Its function is as follows. One of two assembly initiator proteins, it binds directly to the 5'-end of the 23S rRNA, where it nucleates assembly of the 50S subunit. One of the proteins that surrounds the polypeptide exit tunnel on the outside of the subunit. In Mycobacterium avium (strain 104), this protein is Large ribosomal subunit protein uL24.